The following is a 325-amino-acid chain: Aldose 1-epimerase (325 aa).

Residue 73–74 participates in substrate binding; that stretch reads NR. Residue His177 is the Proton donor of the active site. Asp230 is a substrate binding site. The active-site Proton acceptor is the Glu283.

It belongs to the aldose epimerase family.

The enzyme catalyses alpha-D-glucose = beta-D-glucose. The protein operates within carbohydrate metabolism; hexose metabolism. The sequence is that of Aldose 1-epimerase (galM) from Bacillus subtilis (strain 168).